The sequence spans 1463 residues: Secretory phospholipase A2 receptor (1463 aa).

The first 20 residues, 1 to 20 (MLLSPSLLLLLLLGAPRGCA), serve as a signal peptide directing secretion. Residues 21 to 1397 (EGVAAALTPE…ALPEKGPSHS (1377 aa)) are Extracellular-facing. In terms of domain architecture, Ricin B-type lectin spans 38-161 (KGIFVIQSES…GSGGGDICEY (124 aa)). Disulfide bonds link cysteine 51/cysteine 64, cysteine 89/cysteine 106, cysteine 178/cysteine 204, cysteine 192/cysteine 219, cysteine 260/cysteine 354, cysteine 330/cysteine 346, cysteine 406/cysteine 501, cysteine 478/cysteine 493, cysteine 617/cysteine 634, cysteine 699/cysteine 796, cysteine 774/cysteine 788, cysteine 840/cysteine 937, cysteine 914/cysteine 929, and cysteine 1067/cysteine 1087. The N-linked (GlcNAc...) asparagine glycan is linked to asparagine 93. The Fibronectin type-II domain occupies 173–221 (THGMPCMFPFQYNHQWHHECTREGREDDLLWCATTSRYERDEKWGFCPD). C-type lectin domains lie at 238-355 (NSHI…YICK), 385-502 (YNRN…YICK), 522-643 (HGGF…MSLC), 673-797 (GLAS…WICK), 819-938 (YQDA…SICK), 965-1096 (FNYK…GFVC), 1121-1232 (YGNR…GAIC), and 1257-1378 (FKSN…FICK). Asparagine 454 carries N-linked (GlcNAc...) asparagine glycosylation. Asparagine 1123 carries N-linked (GlcNAc...) asparagine glycosylation. Disulfide bonds link cysteine 1209-cysteine 1223, cysteine 1280-cysteine 1377, and cysteine 1354-cysteine 1369. Residues 1398–1418 (IIPLAVVLTLIVIVAICTLSF) traverse the membrane as a helical segment. Residues 1419–1463 (CIYKHNGGFFRRLAGFRNPYYPATNFSTVYLEENILISDLEKSDQ) lie on the Cytoplasmic side of the membrane. Residues 1436–1442 (NPYYPAT) carry the Endocytosis signal motif.

Interacts with sPLA2-IB/PLA2G1B; this interaction mediates intracellular signaling as well as clearance of extracellular sPLA2-IB/PLA2G1B via endocytotic pathway. Interacts with sPLA2-X/PLA2G10; this interaction mediates sPLA2-X/PLA2G10 clearance and inactivation. In terms of processing, the secretory phospholipase A2 receptor form may be produced by the action of metalloproteinases. It contains all extracellular domains and only lacks transmembrane and cytosolic regions. It is however unclear whether this form is produced by proteolytic cleavage as suggested by some experiments, or by alternative splicing, as in the case of isoform 2 that shares all characteristics of secretory phospholipase A2 receptor form. As to expression, expressed in podocytes (at protein level). Present in lung macrophage (at protein level). Highly expressed in kidney. Also expressed in pancreas, amnion, choriodecidua and placenta. Isoform 2 is expressed at much lower level.

It is found in the cell membrane. The protein resides in the secreted. Receptor for secretory phospholipase A2 (sPLA2). Acts as a receptor for phospholipase sPLA2-IB/PLA2G1B but not sPLA2-IIA/PLA2G2A. Also able to bind to snake PA2-like toxins. Although its precise function remains unclear, binding of sPLA2 to its receptor participates in both positive and negative regulation of sPLA2 functions as well as clearance of sPLA2. Binding of sPLA2-IB/PLA2G1B induces various effects depending on the cell type, such as activation of the mitogen-activated protein kinase (MAPK) cascade to induce cell proliferation, the production of lipid mediators, selective release of arachidonic acid in bone marrow-derived mast cells. In neutrophils, binding of sPLA2-IB/PLA2G1B can activate p38 MAPK to stimulate elastase release and cell adhesion. May be involved in responses in pro-inflammatory cytokine productions during endotoxic shock. Also has endocytic properties and rapidly internalizes sPLA2 ligands, which is particularly important for the clearance of extracellular sPLA2s to protect their potent enzymatic activities. The soluble secretory phospholipase A2 receptor form is circulating and acts as a negative regulator of sPLA2 functions by blocking the biological functions of sPLA2-IB/PLA2G1B. In podocytes, binding of sPLA2-IB/PLA2G1B can regulate podocyte survival and glomerular homeostasis. The chain is Secretory phospholipase A2 receptor (PLA2R1) from Homo sapiens (Human).